An 82-amino-acid chain; its full sequence is Penaeidin-3h (82 aa).

The signal sequence occupies residues 1–19 (MRLVVCLVFLASFALVCQG). Position 20 is a pyrrolidone carboxylic acid (Q20). 2 disulfide bridges follow: C55–C73 and C67–C74. The residue at position 81 (S81) is a Serine amide.

The protein belongs to the penaeidin family.

Its subcellular location is the cytoplasmic granule. In terms of biological role, antibacterial and antifungal activity. Presents chitin-binding activity. The protein is Penaeidin-3h of Penaeus vannamei (Whiteleg shrimp).